Reading from the N-terminus, the 451-residue chain is Glyceraldehyde-3-phosphate dehydrogenase B, chloroplastic (451 aa).

The N-terminal 83 residues, 1–83 (MASHAALAPS…AAPVRGETVA (83 aa)), are a transit peptide targeting the chloroplast. NADP(+)-binding positions include 94 to 95 (RI), Asp118, and Arg163. D-glyceraldehyde 3-phosphate contacts are provided by residues 237-239 (SCT), Thr268, Arg283, 296-297 (TG), and Arg319. Residue Cys238 is the Nucleophile of the active site. Asn402 is an NADP(+) binding site.

This sequence belongs to the glyceraldehyde-3-phosphate dehydrogenase family. As to quaternary structure, tetramer of either four A chains (GAPDH 2) or two A and two B chains (GAPDH 1).

The protein resides in the plastid. Its subcellular location is the chloroplast. It catalyses the reaction D-glyceraldehyde 3-phosphate + phosphate + NADP(+) = (2R)-3-phospho-glyceroyl phosphate + NADPH + H(+). It functions in the pathway carbohydrate biosynthesis; Calvin cycle. This chain is Glyceraldehyde-3-phosphate dehydrogenase B, chloroplastic (GAPB), found in Spinacia oleracea (Spinach).